A 99-amino-acid polypeptide reads, in one-letter code: DNA-directed RNA polymerase subunit omega (99 aa).

The protein belongs to the RNA polymerase subunit omega family. The RNAP catalytic core consists of 2 alpha, 1 beta, 1 beta' and 1 omega subunit. When a sigma factor is associated with the core the holoenzyme is formed, which can initiate transcription.

It carries out the reaction RNA(n) + a ribonucleoside 5'-triphosphate = RNA(n+1) + diphosphate. Its function is as follows. Promotes RNA polymerase assembly. Latches the N- and C-terminal regions of the beta' subunit thereby facilitating its interaction with the beta and alpha subunits. The protein is DNA-directed RNA polymerase subunit omega of Stenotrophomonas maltophilia (strain K279a).